Reading from the N-terminus, the 208-residue chain is Density-regulated protein (208 aa).

Polar residues predominate over residues 1–12 (MATTENAESGSP). Disordered regions lie at residues 1–20 (MATT…DRAD) and 69–120 (GTAP…KKKT). A Phosphoserine modification is found at serine 9. The segment covering 77 to 89 (KGGGGGEDGGGGR) has biased composition (gly residues). Residues 105-120 (KQKRGGRGQIKQKKKT) show a composition bias toward basic residues. The SUI1 domain maps to 125–192 (VTIAKIPRAK…DIIDVIQEKW (68 aa)).

Belongs to the DENR family.

Functionally, may be involved in the translation of target mRNAs by scanning and recognition of the initiation codon. Involved in translation initiation; promotes recruitment of aminoacetyled initiator tRNA to P site of 40S ribosomes. Can promote release of deacylated tRNA and mRNA from recycled 40S subunits following ABCE1-mediated dissociation of post-termination ribosomal complexes into subunits. This is Density-regulated protein (denr) from Danio rerio (Zebrafish).